Here is a 511-residue protein sequence, read N- to C-terminus: T-complex protein 1 subunit eta (511 aa).

This sequence belongs to the TCP-1 chaperonin family. In terms of assembly, component of the T-complex protein 1 (TCP1) complex.

It localises to the cytoplasm. In terms of biological role, molecular chaperone; assists the folding of proteins upon ATP hydrolysis. This Encephalitozoon cuniculi (strain GB-M1) (Microsporidian parasite) protein is T-complex protein 1 subunit eta (CCT7).